A 468-amino-acid chain; its full sequence is Interstitial collagenase (468 aa).

The signal sequence occupies residues 1–18 (MPGLPLLLLLLWGVGSHG). Residues 19 to 98 (FPAASETQEQ…PRCGVPDVAQ (80 aa)) constitute a propeptide, activation peptide. The Cysteine switch motif lies at 89-96 (PRCGVPDV). Cysteine 91 is a Zn(2+) binding site. N-linked (GlcNAc...) asparagine glycosylation is present at asparagine 119. Ca(2+)-binding residues include aspartate 123 and aspartate 157. Zn(2+) is bound by residues histidine 167 and aspartate 169. Residues aspartate 174, glycine 175, glutamate 177, and glutamine 179 each coordinate Ca(2+). Residue histidine 182 coordinates Zn(2+). Ca(2+)-binding residues include glycine 189, glycine 191, and aspartate 193. Zn(2+) is bound at residue histidine 195. Ca(2+)-binding residues include aspartate 197, glutamate 198, and aspartate 200. Residue histidine 217 coordinates Zn(2+). Glutamate 218 is a catalytic residue. Histidine 221 and histidine 227 together coordinate Zn(2+). Residue threonine 273 is modified to Phosphothreonine. Hemopexin repeat units follow at residues 274–323 (PKVC…WPHL), 324–370 (PNGL…FGFP), 373–421 (VNHI…FPGI), and 422–465 (GNKV…WFNC). Residues cysteine 277 and cysteine 465 are joined by a disulfide bond. Ca(2+) contacts are provided by aspartate 284 and glutamine 328. Residue tyrosine 359 is modified to Phosphotyrosine; by PKDCC. Residues aspartate 377 and aspartate 426 each contribute to the Ca(2+) site.

Belongs to the peptidase M10A family. It depends on Ca(2+) as a cofactor. The cofactor is Zn(2+). Tyrosine phosphorylated in platelets by PKDCC/VLK.

The protein resides in the secreted. Its subcellular location is the extracellular space. It localises to the extracellular matrix. The enzyme catalyses Cleavage of the triple helix of collagen at about three-quarters of the length of the molecule from the N-terminus, at 775-Gly-|-Ile-776 in the alpha1(I) chain. Cleaves synthetic substrates and alpha-macroglobulins at bonds where P1' is a hydrophobic residue.. With respect to regulation, can be activated without removal of the activation peptide. Cleaves collagens of types I, II, and III at one site in the helical domain. Also cleaves collagens of types VII and X. The sequence is that of Interstitial collagenase (MMP1) from Oryctolagus cuniculus (Rabbit).